We begin with the raw amino-acid sequence, 526 residues long: D-arabinono-1,4-lactone oxidase (526 aa).

Residues 22–196 (FWSRPSLYFQ…VYATLRTVPA (175 aa)) enclose the FAD-binding PCMH-type domain. His59 carries the pros-8alpha-FAD histidine modification.

This sequence belongs to the oxygen-dependent FAD-linked oxidoreductase family. The cofactor is FAD.

The protein localises to the mitochondrion membrane. The catalysed reaction is D-arabinono-1,4-lactone + O2 = dehydro-D-arabinono-1,4-lactone + H2O2 + H(+). Its pathway is cofactor biosynthesis; D-erythroascorbate biosynthesis; dehydro-D-arabinono-1,4-lactone from D-arabinose: step 2/2. The polypeptide is D-arabinono-1,4-lactone oxidase (ALO1) (Yarrowia lipolytica (strain CLIB 122 / E 150) (Yeast)).